The sequence spans 375 residues: MSDLRDPAPYDALLLLSFGGPEGPDDVVPFLANVTRGRGIPEERLKEVGQHYFLFGGVSPINEQNRALLGALRKDFADHGLDLPVYWGNRNWAPYLTDVLREMTTDGHRRIAVLATSAYASYSGCRQYRENLAESLAALEAEGLEVPRVDKLRHYFNHPGFVAPMVDGVLASLADLPEDVRAGAHLAFTTHSIPTSAADASGPVEAHGEGGAYVAEHLDVARLIVDAVRAETGIEYPWRLVYQSRSGAPHIPWLEPDICDHLETLGAEGVPAVVMAPIGFVSDHMEVLYDLDTEATAKAAEIGLPVRRSATVGDDPRFAAAVRDLLLERAATERGRAVERCALGSLGPSHDLCPVGCCPARAPKPAAAGADSPYV.

Fe-coproporphyrin III-binding residues include Ser59 and Tyr128. The Fe(2+) site is built by His191 and Glu286.

The protein belongs to the ferrochelatase family.

It localises to the cytoplasm. The enzyme catalyses Fe-coproporphyrin III + 2 H(+) = coproporphyrin III + Fe(2+). It participates in porphyrin-containing compound metabolism; protoheme biosynthesis. Functionally, involved in coproporphyrin-dependent heme b biosynthesis. Catalyzes the insertion of ferrous iron into coproporphyrin III to form Fe-coproporphyrin III. This chain is Coproporphyrin III ferrochelatase, found in Streptomyces griseus subsp. griseus (strain JCM 4626 / CBS 651.72 / NBRC 13350 / KCC S-0626 / ISP 5235).